A 954-amino-acid polypeptide reads, in one-letter code: Glycine dehydrogenase (decarboxylating) (954 aa).

Lysine 706 carries the post-translational modification N6-(pyridoxal phosphate)lysine.

The protein belongs to the GcvP family. The glycine cleavage system is composed of four proteins: P, T, L and H. It depends on pyridoxal 5'-phosphate as a cofactor.

The catalysed reaction is N(6)-[(R)-lipoyl]-L-lysyl-[glycine-cleavage complex H protein] + glycine + H(+) = N(6)-[(R)-S(8)-aminomethyldihydrolipoyl]-L-lysyl-[glycine-cleavage complex H protein] + CO2. The glycine cleavage system catalyzes the degradation of glycine. The P protein binds the alpha-amino group of glycine through its pyridoxal phosphate cofactor; CO(2) is released and the remaining methylamine moiety is then transferred to the lipoamide cofactor of the H protein. The protein is Glycine dehydrogenase (decarboxylating) of Pseudomonas syringae pv. tomato (strain ATCC BAA-871 / DC3000).